We begin with the raw amino-acid sequence, 92 residues long: MARSVWKGPFVDGYLLKKAEAARGSTRSEVIKIWSRRSTILPQFVGLTFGVYNGQKHIPVYVSEEMVGHKFGEFSPTRTFHGHAADKKAKRR.

It belongs to the universal ribosomal protein uS19 family.

In terms of biological role, protein S19 forms a complex with S13 that binds strongly to the 16S ribosomal RNA. This Methylobacterium nodulans (strain LMG 21967 / CNCM I-2342 / ORS 2060) protein is Small ribosomal subunit protein uS19.